We begin with the raw amino-acid sequence, 359 residues long: MRQILIAVGLALAVSILLTPVLIRLFTRQGFGHEIREDGPPTHHKKRGTPSMGGVAILAGIWVSYLGTHLVGLALDGEGPSASGLLVLGLATALGIVGFIDDLIKIRRARNLGLNKTAKTVGILAAALLFGVLALQFGNADGLTPGSPELSYVREIATVTLAPLIFVLFCVVLVSAWSNAVNFTDGLDGLAAGAMAMVCAAYVLITFWQYRNACATSPGLGCYNVRDPLDLALVAAAAAGACIGFLWWNAAPAKIFMGDTGSLALGGIIAGLSVTSRTEILAVVLGALFVAEVTSVVVQILAFRTTGRRVFRMAPFHHHFELVGWAETTVIIRFWLLTAIACGLGVALFYGEWLTAVGA.

10 helical membrane passes run 3–23 (QILI…PVLI), 55–75 (VAIL…GLAL), 84–104 (GLLV…DDLI), 120–140 (TVGI…FGNA), 156–176 (IATV…LVSA), 187–207 (LDGL…LITF), 231–251 (LALV…WNAA), 255–275 (IFMG…LSVT), 280–300 (ILAV…VVQI), and 334–354 (FWLL…GEWL).

This sequence belongs to the glycosyltransferase 4 family. MraY subfamily. It depends on Mg(2+) as a cofactor.

Its subcellular location is the cell membrane. The enzyme catalyses UDP-N-acetyl-alpha-D-muramoyl-L-alanyl-gamma-D-glutamyl-meso-2,6-diaminopimeloyl-D-alanyl-D-alanine + di-trans,octa-cis-undecaprenyl phosphate = di-trans,octa-cis-undecaprenyl diphospho-N-acetyl-alpha-D-muramoyl-L-alanyl-D-glutamyl-meso-2,6-diaminopimeloyl-D-alanyl-D-alanine + UMP. The protein operates within cell wall biogenesis; peptidoglycan biosynthesis. Its function is as follows. Catalyzes the initial step of the lipid cycle reactions in the biosynthesis of the cell wall peptidoglycan: transfers peptidoglycan precursor phospho-MurNAc-pentapeptide from UDP-MurNAc-pentapeptide onto the lipid carrier undecaprenyl phosphate, yielding undecaprenyl-pyrophosphoryl-MurNAc-pentapeptide, known as lipid I. In Mycobacterium sp. (strain JLS), this protein is Phospho-N-acetylmuramoyl-pentapeptide-transferase.